Reading from the N-terminus, the 377-residue chain is NADH dehydrogenase [ubiquinone] 1 alpha subcomplex subunit 9, mitochondrial (377 aa).

The transit peptide at 1-35 (MAAAAQSRVVRVLSMSRSAITAIATSVCHGPPCRQ) directs the protein to the mitochondrion. Position 175 is an N6-succinyllysine (Lys-175). Residues Lys-189 and Lys-370 each carry the N6-acetyllysine modification.

The protein belongs to the complex I NDUFA9 subunit family. Complex I is composed of 45 different subunits. This a component of the hydrophobic protein fraction. Interacts with BLOC1S1. Interacts with SLC2A4. Interacts with CLOCK. Interacts with RAB5IF. Requires FAD as cofactor. In terms of processing, acetylated on lysine residues. BLOC1S1 is required for acetylation. Acetylated by CLOCK in a circadian manner.

Its subcellular location is the mitochondrion matrix. Its function is as follows. Accessory subunit of the mitochondrial membrane respiratory chain NADH dehydrogenase (Complex I), that is believed not to be involved in catalysis. Required for proper complex I assembly. Complex I functions in the transfer of electrons from NADH to the respiratory chain. The immediate electron acceptor for the enzyme is believed to be ubiquinone. This Homo sapiens (Human) protein is NADH dehydrogenase [ubiquinone] 1 alpha subcomplex subunit 9, mitochondrial (NDUFA9).